Consider the following 217-residue polypeptide: Probable GTP-binding protein EngB (217 aa).

Residues 24 to 207 (SQPEICFAGR…HALIESWLIP (184 aa)) form the EngB-type G domain. GTP contacts are provided by residues 32-39 (GRSNAGKS), 59-63 (GRTQH), 81-84 (DLPG), 148-151 (TKCD), and 185-188 (LFSA). The Mg(2+) site is built by Ser39 and Thr61.

It belongs to the TRAFAC class TrmE-Era-EngA-EngB-Septin-like GTPase superfamily. EngB GTPase family. Mg(2+) is required as a cofactor.

Its function is as follows. Necessary for normal cell division and for the maintenance of normal septation. This is Probable GTP-binding protein EngB from Paraburkholderia xenovorans (strain LB400).